Reading from the N-terminus, the 442-residue chain is UDP-N-acetylglucosamine 1-carboxyvinyltransferase (442 aa).

22-23 (KN) is a phosphoenolpyruvate binding site. R94 serves as a coordination point for UDP-N-acetyl-alpha-D-glucosamine. D119 acts as the Proton donor in catalysis. The UDP-N-acetyl-alpha-D-glucosamine site is built by D309 and V331.

It belongs to the EPSP synthase family. MurA subfamily.

The protein resides in the cytoplasm. The catalysed reaction is phosphoenolpyruvate + UDP-N-acetyl-alpha-D-glucosamine = UDP-N-acetyl-3-O-(1-carboxyvinyl)-alpha-D-glucosamine + phosphate. It participates in cell wall biogenesis; peptidoglycan biosynthesis. Functionally, cell wall formation. Adds enolpyruvyl to UDP-N-acetylglucosamine. This Chlamydia muridarum (strain MoPn / Nigg) protein is UDP-N-acetylglucosamine 1-carboxyvinyltransferase.